A 274-amino-acid chain; its full sequence is Kit ligand (274 aa).

The signal sequence occupies residues 1–25; the sequence is MKKTQTWIITCIYLQLLLFNPLVKT. Residues 26–215 are Extracellular-facing; sequence KGICGKRVTD…SNSIGDSNLQ (190 aa). 2 disulfides stabilise this stretch: Cys29–Cys114 and Cys68–Cys164. N-linked (GlcNAc...) asparagine glycosylation is found at Asn90, Asn97, Asn145, and Asn196. A helical transmembrane segment spans residues 216–238; the sequence is WAAMALPAFFSLVIGFAFGALYW. The Cytoplasmic segment spans residues 239-274; sequence KKKQPNLTRTVENIQINEEDNEISMLQEKEREFQEV.

This sequence belongs to the SCF family. As to quaternary structure, homodimer, non-covalently linked. In terms of processing, a soluble form is produced by proteolytic processing of the extracellular domain.

The protein resides in the cytoplasm. Its subcellular location is the cytoskeleton. It is found in the cell membrane. The protein localises to the cell projection. It localises to the lamellipodium. The protein resides in the filopodium. Its subcellular location is the secreted. Functionally, stimulates the proliferation of mast cells. Able to augment the proliferation of both myeloid and lymphoid hematopoietic progenitors in bone marrow culture. Also mediates cell-cell adhesion. Acts synergistically with other cytokines, probably interleukins. This Canis lupus familiaris (Dog) protein is Kit ligand (KITLG).